The following is a 124-amino-acid chain: Acidic phospholipase A2 (124 aa).

Disulfide bonds link Cys26–Cys116, Cys28–Cys44, Cys43–Cys95, Cys49–Cys124, Cys50–Cys88, Cys57–Cys81, and Cys75–Cys86. Ca(2+)-binding residues include Tyr27, Gly29, and Gly31. His47 is an active-site residue. Asp48 is a binding site for Ca(2+). The active site involves Asp89.

Belongs to the phospholipase A2 family. Group II subfamily. D49 sub-subfamily. Monomer. It depends on Ca(2+) as a cofactor. Expressed by the venom gland.

It localises to the secreted. It carries out the reaction a 1,2-diacyl-sn-glycero-3-phosphocholine + H2O = a 1-acyl-sn-glycero-3-phosphocholine + a fatty acid + H(+). In terms of biological role, snake venom phospholipase A2 (PLA2) that acts in vivo as an anti-thrombotic agent. Inhibits platelet aggregation induced by ADP, arachidonic acid, and thrombin. PLA2 catalyzes the calcium-dependent hydrolysis of the 2-acyl groups in 3-sn-phosphoglycerides. The sequence is that of Acidic phospholipase A2 from Gloydius halys (Chinese water mocassin).